The sequence spans 840 residues: Translation initiation factor IF-2 (840 aa).

The interval 1-251 (MTEEKKFSSS…GPAVPATERK (251 aa)) is disordered. Polar residues-rich tracts occupy residues 38–50 (DGTN…TPRS) and 65–83 (NRHT…ASRP). Low complexity predominate over residues 84-102 (NQSKSQGQGGRNNQRPGSR). Basic and acidic residues-rich tracts occupy residues 110-135 (PMIR…KTDN) and 158-168 (KPAEQSKKAAE). Positions 169–207 (KPAQTKPKTAETKTTATTTQSGTGKFGGALASGNNSARN) are enriched in low complexity. The span at 230-239 (GSKKSRRIAA) shows a compositional bias: basic residues. In terms of domain architecture, tr-type G spans 341-510 (ARPPVVTIMG…LLQAEVLELK (170 aa)). The interval 350 to 357 (GHVDHGKT) is G1. 350-357 (GHVDHGKT) contacts GTP. The interval 375–379 (GITQH) is G2. The interval 396-399 (DTPG) is G3. Residues 396 to 400 (DTPGH) and 450 to 453 (NKID) each bind GTP. Residues 450-453 (NKID) are G4. A G5 region spans residues 486 to 488 (SAK).

This sequence belongs to the TRAFAC class translation factor GTPase superfamily. Classic translation factor GTPase family. IF-2 subfamily.

It localises to the cytoplasm. Functionally, one of the essential components for the initiation of protein synthesis. Protects formylmethionyl-tRNA from spontaneous hydrolysis and promotes its binding to the 30S ribosomal subunits. Also involved in the hydrolysis of GTP during the formation of the 70S ribosomal complex. This Leuconostoc citreum (strain KM20) protein is Translation initiation factor IF-2.